We begin with the raw amino-acid sequence, 960 residues long: MRRTARIMLVLLGIGLILFIALSGLFEDYLWYSDLGYSQLFWTPLISKGIIQIINGTILFTFIAGTLFSIRHAILTFVNERLRKRLRLVHEMDRPLYHLSQRKMTLWLIIISVLISFGVSFVTGFTGWLEVLTFLNATPFGQGDPIFFKDLGFYVFQLPFFITIYNAFFGPLFFLTFFTIVFYSFAGVIHFQSLLIWKKQAIEINSAARRHLALLITVLFLFKGFGCYFDTFRLLYSQHGLVLGAGYADLHATLPALKALLVLCALGVIGGGLAFFKDEVRLLTLPILAIFISIPLLSGLGPMVLQSLVVIPNELEKETPYIQNEIALTRFAYGLDQISEEDYQADQPLTSETLQKELPTLNNVRLNDPHPLLRTYTQKQGIRPYYKFYNIDMDRYWINGEYRQVMLAPREFSYQDLEKTAQTFVNLRFKYTHGFGVVASFANAVTPEGLPAFAIKDVPPTTDYQELQISQPRIYFGEMTHDWVVVNTDLKEFDYPEGKANAETRYEGKSGIKLTPFNRLMLSIKHGTLRFYLANEINSQSRILLHRNIMDRVEKLAPFLQYDDNPYLVVDEGRLKWIIDAYTVSKTFPYSSMYPERELNYIRNSVKVVVDAYDGTVDFFAVDAQDPILQTYRKIFPGVFKDLSAMPDTLQTHLRYPETLFKIQSTMLKNFHMTDPTVFYNKEDTWDIAKELFGSEPQNIAPYYSVMRLPDSEQPESVLMIPFTPSSNANNIRTNMVAWLAARMDGEHYGELILYKVPKNTEVDGPLQVESRIDQDPEISRQLALWDQKGSSVIRGDLVVLPLAGNFLYVEPIYLQSEKAGSIPEMKRVIVAYGDKIVMSETFEEALAQLFGVRLKLSPPPPANVSALAVSPMSAELKPEETEETTEETEEPVDPQEDTQALLKQIEQIREMLNQLEQQFKKITGDSVDVEGGKKADEDAHDVQTDPEGSVSSEQSKTNP.

7 helical membrane passes run I7 to E27, I50 to I70, T105 to F125, F169 to I189, L212 to F232, A256 to F276, and L285 to L305. Disordered stretches follow at residues S866 to T899 and T924 to P960. The span at E881 to E897 shows a compositional bias: acidic residues. Residues E931 to Q944 show a composition bias toward basic and acidic residues. Residues S950–P960 are compositionally biased toward polar residues.

The protein belongs to the UPF0182 family.

It localises to the cell membrane. The polypeptide is UPF0182 protein DSY1630 (Desulfitobacterium hafniense (strain Y51)).